Consider the following 310-residue polypeptide: Vomeronasal type-1 receptor 44 (310 aa).

The Extracellular portion of the chain corresponds to 1 to 20; the sequence is MNKANLLHIDTNIKITLLAE. A helical membrane pass occupies residues 21 to 41; it reads VSVGISANSILFIAYLCMLLG. The Cytoplasmic portion of the chain corresponds to 42 to 50; sequence ENRHKPIDL. A helical transmembrane segment spans residues 51-71; it reads YIAFLSLTQLMLLITMGLIAV. The Extracellular portion of the chain corresponds to 72–93; sequence DMFMPWGRWDSTTCQSLIYLHR. Residues cysteine 85 and cysteine 172 are joined by a disulfide bond. Residues 94-114 traverse the membrane as a helical segment; the sequence is FLRGLTLCATCLLNVLWTITL. The Cytoplasmic portion of the chain corresponds to 115–131; that stretch reads SSRNSCLAKFKHKYPHH. Residues 132 to 152 form a helical membrane-spanning segment; the sequence is ISGAFLFLCVLYMSFSSHFLV. The Extracellular segment spans residues 153 to 190; the sequence is SMTVTPNLTSENFMYVTQSCSLLPMSYSRTSMFSTPVA. Residue asparagine 159 is glycosylated (N-linked (GlcNAc...) asparagine). A helical membrane pass occupies residues 191–211; that stretch reads IRETFLISLMALSSGYMVALL. The Cytoplasmic segment spans residues 212-238; sequence WRHKKQAQHLRSTSLSSKASPEQRATR. A helical transmembrane segment spans residues 239-259; the sequence is TILLLMSFFVVFYILDTVIFH. The Extracellular portion of the chain corresponds to 260 to 268; the sequence is SRMKFKDGS. The chain crosses the membrane as a helical span at residues 269 to 289; that stretch reads ILYCFQIIVSHSYVTVSPFVF. Residues 290–310 are Cytoplasmic-facing; the sequence is ICTEKHIIKFLRSMCGRIANI.

Belongs to the G-protein coupled receptor 1 family.

The protein resides in the cell membrane. In terms of biological role, putative pheromone receptor implicated in the regulation of social and reproductive behavior. This is Vomeronasal type-1 receptor 44 (Vmn1r44) from Mus musculus (Mouse).